A 126-amino-acid chain; its full sequence is Holo-[acyl-carrier-protein] synthase (126 aa).

Mg(2+) contacts are provided by Asp-9 and Glu-58.

Belongs to the P-Pant transferase superfamily. AcpS family. Mg(2+) serves as cofactor.

It is found in the cytoplasm. The catalysed reaction is apo-[ACP] + CoA = holo-[ACP] + adenosine 3',5'-bisphosphate + H(+). Transfers the 4'-phosphopantetheine moiety from coenzyme A to a Ser of acyl-carrier-protein. This chain is Holo-[acyl-carrier-protein] synthase, found in Vibrio vulnificus (strain YJ016).